The primary structure comprises 184 residues: Peptidyl-tRNA hydrolase (184 aa).

Residue Y14 coordinates tRNA. H19 functions as the Proton acceptor in the catalytic mechanism. Residues F64, N66, and N112 each coordinate tRNA.

It belongs to the PTH family. As to quaternary structure, monomer.

Its subcellular location is the cytoplasm. The catalysed reaction is an N-acyl-L-alpha-aminoacyl-tRNA + H2O = an N-acyl-L-amino acid + a tRNA + H(+). Functionally, hydrolyzes ribosome-free peptidyl-tRNAs (with 1 or more amino acids incorporated), which drop off the ribosome during protein synthesis, or as a result of ribosome stalling. Catalyzes the release of premature peptidyl moieties from peptidyl-tRNA molecules trapped in stalled 50S ribosomal subunits, and thus maintains levels of free tRNAs and 50S ribosomes. The polypeptide is Peptidyl-tRNA hydrolase (Thermoanaerobacter sp. (strain X514)).